We begin with the raw amino-acid sequence, 370 residues long: Gap junction delta-4 protein (370 aa).

The Cytoplasmic portion of the chain corresponds to 1-19; it reads MEGVDLLGFLIITLNCNVT. A helical transmembrane segment spans residues 20–40; it reads MXGKLWFVLTMLLRMLVIVLA. The Extracellular segment spans residues 41 to 76; sequence GRPVYQDEQERFVCNTLQPGCANVCYDVFSPVSHLR. The chain crosses the membrane as a helical span at residues 77-97; it reads FWLIQGVCVLLPSAVFSVYVL. Topologically, residues 98–146 are cytoplasmic; the sequence is HRGATLAALGPRRCPEPRDTASGQRRCPGSCRERGGLEVPDFSAGYIIH. Residues 147–167 traverse the membrane as a helical segment; the sequence is LLLRTLLEAAFGALNYLLFGF. The Extracellular portion of the chain corresponds to 168-196; that stretch reads LAPNKFPCTRPPCTGVVDCYVSRPTEKSL. A helical transmembrane segment spans residues 197-217; that stretch reads LMLFLWAVSALSFLLGLADLV. The Cytoplasmic segment spans residues 218-370; the sequence is CSLRRLMRRR…HLRARKSEWV (153 aa). The disordered stretch occupies residues 227 to 370; sequence RPGPPTSPSI…HLRARKSEWV (144 aa). Basic and acidic residues predominate over residues 246 to 260; the sequence is PEGRPTDKEGGREQE. Positions 331-345 are enriched in low complexity; sequence PSAAPSHLAAHPSCS.

Belongs to the connexin family. Delta-type subfamily. As to quaternary structure, a connexon is composed of a hexamer of connexins.

The protein localises to the cell membrane. The protein resides in the cell junction. It localises to the gap junction. In terms of biological role, one gap junction consists of a cluster of closely packed pairs of transmembrane channels, the connexons, through which materials of low MW diffuse from one cell to a neighboring cell. The chain is Gap junction delta-4 protein (GJD4) from Macaca fascicularis (Crab-eating macaque).